The primary structure comprises 233 residues: tRNA (guanine-N(7)-)-methyltransferase (233 aa).

A disordered region spans residues 1–36; it reads MSEFDPNPPRRNFYGRRHGKTLRQSQKGYLSEDLGS. S-adenosyl-L-methionine is bound by residues Glu-68, Glu-93, Asp-120, and Asp-142. Residue Asp-142 is part of the active site. Residues Lys-146, Asp-178, and 211–214 each bind substrate; that span reads TRYE.

The protein belongs to the class I-like SAM-binding methyltransferase superfamily. TrmB family.

The catalysed reaction is guanosine(46) in tRNA + S-adenosyl-L-methionine = N(7)-methylguanosine(46) in tRNA + S-adenosyl-L-homocysteine. Its pathway is tRNA modification; N(7)-methylguanine-tRNA biosynthesis. In terms of biological role, catalyzes the formation of N(7)-methylguanine at position 46 (m7G46) in tRNA. The polypeptide is tRNA (guanine-N(7)-)-methyltransferase (Paracoccus denitrificans (strain Pd 1222)).